The sequence spans 390 residues: Protein-glutamate methylesterase/protein-glutamine glutaminase 1 (390 aa).

In terms of domain architecture, Response regulatory spans 4 to 121; that stretch reads KVLVVDDSGF…SRNPQKVKQL (118 aa). Position 55 is a 4-aspartylphosphate (Asp55). The span at 132 to 186 shows a compositional bias: low complexity; the sequence is SNRRSSGIGSASAASPAPAAPAPSTLSSRAPAPSAAAPARAVPSRTVAPAAAPAA. A disordered region spans residues 132–201; sequence SNRRSSGIGS…PAHPTTTGTA (70 aa). The CheB-type methylesterase domain maps to 195–387; the sequence is PTTTGTAKRK…LDDIGRHLVE (193 aa). Catalysis depends on residues Ser214, His241, and Asp334.

This sequence belongs to the CheB family. Post-translationally, phosphorylated by CheA. Phosphorylation of the N-terminal regulatory domain activates the methylesterase activity.

It localises to the cytoplasm. The catalysed reaction is [protein]-L-glutamate 5-O-methyl ester + H2O = L-glutamyl-[protein] + methanol + H(+). The enzyme catalyses L-glutaminyl-[protein] + H2O = L-glutamyl-[protein] + NH4(+). Its function is as follows. Involved in chemotaxis. Part of a chemotaxis signal transduction system that modulates chemotaxis in response to various stimuli. Catalyzes the demethylation of specific methylglutamate residues introduced into the chemoreceptors (methyl-accepting chemotaxis proteins or MCP) by CheR. Also mediates the irreversible deamidation of specific glutamine residues to glutamic acid. This chain is Protein-glutamate methylesterase/protein-glutamine glutaminase 1, found in Pseudomonas syringae pv. tomato (strain ATCC BAA-871 / DC3000).